The sequence spans 124 residues: Large ribosomal subunit protein bL20c (124 aa).

It belongs to the bacterial ribosomal protein bL20 family.

It is found in the plastid. Its subcellular location is the chloroplast. Binds directly to 23S ribosomal RNA and is necessary for the in vitro assembly process of the 50S ribosomal subunit. It is not involved in the protein synthesizing functions of that subunit. The protein is Large ribosomal subunit protein bL20c (rpl20) of Euglena gracilis.